Consider the following 213-residue polypeptide: MPRRAENWDEAEVGAEEAGVEEYGPEEDGGEESGAEESGPEESGPEELGAEEEMEAGRPRPVLRSVNSREPSQVIFCNRSPRVVLPVWLNFDGEPQPYPTLPPGTGRRIHSYRGHLWLFRDAGTHDGLLVNQTELFVPSLNVDGQPIFANITLPVYTLKERCLQVVRSLVKPENYRRLDIVRSLYEDLEDHPNVQKDLERLTQERIAHQRMGD.

The disordered stretch occupies residues 1 to 65; the sequence is MPRRAENWDE…AGRPRPVLRS (65 aa). Positions 8-54 are enriched in acidic residues; sequence WDEAEVGAEEAGVEEYGPEEDGGEESGAEESGPEESGPEELGAEEEM. 8 tandem repeats follow at residues 14–18, 19–23, 24–28, 29–33, 34–38, 39–43, 44–48, and 49–53. Residues 14 to 53 are 8 X 5 AA tandem repeats of G-[PAVG]-E-E-[DAYSLE]; the sequence is GAEEAGVEEYGPEEDGGEESGAEESGPEESGPEELGAEEE. The interval 100–155 is involved in binding to CCT complex; it reads TLPPGTGRRIHSYRGHLWLFRDAGTHDGLLVNQTELFVPSLNVDGQPIFANITLPV. The segment at 157 to 166 is interaction with Elongin BC complex; that stretch reads TLKERCLQVV.

This sequence belongs to the VHL family. In terms of assembly, component of the VCB (VHL-Elongin BC-CUL2) complex; this complex acts as a ubiquitin-ligase E3 and directs proteasome-dependent degradation of targeted proteins. Interacts with CUL2; this interaction is dependent on the integrity of the trimeric VCB complex. Interacts (via the beta domain) with HIF1A (via the NTAD domain); this interaction mediates degradation of HIF1A in normoxia and, in hypoxia, prevents ubiquitination and degradation of HIF1A by mediating hypoxia-induced translocation to the nucleus, a process which requires a hypoxia-dependent regulatory signal. Interacts with ADRB2; the interaction, in normoxia, is dependent on hydroxylation of ADRB2 and the subsequent VCB-mediated ubiquitination and degradation of ADRB2. Under hypoxia, hydroxylation, interaction with VHL, ubiquitination and subsequent degradation of ADRB2 are dramatically decreased. Interacts with RNF139, USP33 and JADE1. Found in a complex composed of LIMD1, VHL, EGLN1/PHD2, ELOB and CUL2. Isoform 1 and isoform 3 interact with LIMD1 (via LIM zinc-binding 2), AJUBA (via LIM domains) and WTIP (via LIM domains). Interacts with EPAS1. Interacts with CARD9. Interacts with DCUN1D1 independently of CUL2; this interaction engages DCUN1D1 in the VCB complex and triggers CUL2 neddylation and consequently cullin ring ligase (CRL) substrates polyubiquitylation. Interacts with ALAS1 (hydroxylated form). Interacts with IGFBP1. Expressed in the adult and fetal brain and kidney.

It localises to the cytoplasm. The protein localises to the cell membrane. Its subcellular location is the endoplasmic reticulum. It is found in the nucleus. It participates in protein modification; protein ubiquitination. Functionally, involved in the ubiquitination and subsequent proteasomal degradation via the von Hippel-Lindau ubiquitination complex. Seems to act as a target recruitment subunit in the E3 ubiquitin ligase complex and recruits hydroxylated hypoxia-inducible factor (HIF) under normoxic conditions. Involved in transcriptional repression through interaction with HIF1A, HIF1AN and histone deacetylases. Ubiquitinates, in an oxygen-responsive manner, ADRB2. Acts as a negative regulator of mTORC1 by promoting ubiquitination and degradation of RPTOR. The polypeptide is von Hippel-Lindau disease tumor suppressor (VHL) (Homo sapiens (Human)).